We begin with the raw amino-acid sequence, 860 residues long: MLRKQAGEEDSVVLIDMTSPEAGNGCSYGSTAQASEAGKQQVAPSRVGSSANPPIDFVLVWEEDLRSRENPTQDKTDTHEIWRETFLENLRVAGLKIDQRDVQDEAAAVHYILLSAPWAVLCYYAEDLRLKLPLQELPNQASNWSATLLEWLGIPNILLENVPDTPPEYYSCQFKASKLQWFLGSDNQDTFFTSTKRHQILFEILAKTPYGHQKKGLFGIDQLLAEGVFSAAFPLHDGPFSVVPESSQVLGLTQRQVLFKHWARWGKWRKYQPLDHVRRYFGEKVALYFAWLGFYTGWLLPAAVVGTVVFLAGCFLVFSDVPTQELCHSSDTFDMCPLCSDCSFWLLSSACTLAQAGRLFDHGGTVFFSLFMALWAVLLLEYWKRKNATLAYRWDCSDYEDIEERPRPQFAATAPMTALNPITGEDEPYFPEKNRVRRMLAGSVVLLMMVAVVIMCLVSIILYRAVMAIIVSKSNNAFLSAWASRIASLTGSVVNLVFILILSKVYVILAQVLTRWEMHRTQTAFEDAFTLKVFIFQFVNFYASPVYIAFFKGRFVGYPGNYHTLFGVRNEECPAGGCLSELAQELLVIMVGKQIINNVQEVLVPKLKGCWQKLCSRRKKAGMGANPAPWEADYELLPCEGLFHEYLEMVLQFGFVTIFVAACPLAPLFALLNNWVEIRLDARKFVCEYRRPVAERAQDIGIWFHILAGLTHLAVISNAFLLAFSSDFLPRVYYSWTRAPDLRGFLNFTLARAPPTFTSAHNRTCRYRAFRDDDGHYSPTYWTLLAIRLAFVIVFEHVVFSTGRFLDLLVPDIPESVEIKVKREYYLAKQALADNEALLGATGVKGEQPPSSEPSLGLPA.

Over 1–297 (MLRKQAGEED…YFAWLGFYTG (297 aa)) the chain is Cytoplasmic. The interval 24-50 (NGCSYGSTAQASEAGKQQVAPSRVGSS) is disordered. The chain crosses the membrane as a helical span at residues 298-318 (WLLPAAVVGTVVFLAGCFLVF). Residues 319–362 (SDVPTQELCHSSDTFDMCPLCSDCSFWLLSSACTLAQAGRLFDH) lie on the Extracellular side of the membrane. Residues 363-383 (GGTVFFSLFMALWAVLLLEYW) form a helical membrane-spanning segment. The Cytoplasmic portion of the chain corresponds to 384–441 (KRKNATLAYRWDCSDYEDIEERPRPQFAATAPMTALNPITGEDEPYFPEKNRVRRMLA). Residues 442–462 (GSVVLLMMVAVVIMCLVSIIL) traverse the membrane as a helical segment. The Extracellular portion of the chain corresponds to 463–492 (YRAVMAIIVSKSNNAFLSAWASRIASLTGS). Residues 493–513 (VVNLVFILILSKVYVILAQVL) traverse the membrane as a helical segment. The Cytoplasmic segment spans residues 514–530 (TRWEMHRTQTAFEDAFT). The helical transmembrane segment at 531 to 551 (LKVFIFQFVNFYASPVYIAFF) threads the bilayer. Residues 552 to 652 (KGRFVGYPGN…FHEYLEMVLQ (101 aa)) are Extracellular-facing. Residues 653–673 (FGFVTIFVAACPLAPLFALLN) form a helical membrane-spanning segment. Residues 674-701 (NWVEIRLDARKFVCEYRRPVAERAQDIG) are Cytoplasmic-facing. Residues 702 to 722 (IWFHILAGLTHLAVISNAFLL) form a helical membrane-spanning segment. The Extracellular portion of the chain corresponds to 723–779 (AFSSDFLPRVYYSWTRAPDLRGFLNFTLARAPPTFTSAHNRTCRYRAFRDDDGHYSP). N-linked (GlcNAc...) asparagine glycans are attached at residues asparagine 747 and asparagine 762. Residues 780 to 800 (TYWTLLAIRLAFVIVFEHVVF) traverse the membrane as a helical segment. Residues 801–860 (STGRFLDLLVPDIPESVEIKVKREYYLAKQALADNEALLGATGVKGEQPPSSEPSLGLPA) are Cytoplasmic-facing.

It belongs to the anoctamin family.

The protein localises to the cell membrane. It localises to the endoplasmic reticulum. The catalysed reaction is a 1,2-diacyl-sn-glycero-3-phospho-L-serine(in) = a 1,2-diacyl-sn-glycero-3-phospho-L-serine(out). It catalyses the reaction a beta-D-galactosyl-(1&lt;-&gt;1')-N-acylsphing-4-enine(out) = a beta-D-galactosyl-(1&lt;-&gt;1')-N-acylsphing-4-enine(in). It carries out the reaction a 1,2-diacyl-sn-glycero-3-phosphocholine(in) = a 1,2-diacyl-sn-glycero-3-phosphocholine(out). Its function is as follows. Has calcium-dependent phospholipid scramblase activity; scrambles phosphatidylserine, phosphatidylcholine and galactosylceramide. Does not exhibit calcium-activated chloride channel (CaCC) activity. May play a role in cell-cell interactions. In Rattus norvegicus (Rat), this protein is Anoctamin-7 (Ano7).